Reading from the N-terminus, the 225-residue chain is Sugar fermentation stimulation protein homolog (225 aa).

Belongs to the SfsA family.

The sequence is that of Sugar fermentation stimulation protein homolog from Sulfolobus acidocaldarius (strain ATCC 33909 / DSM 639 / JCM 8929 / NBRC 15157 / NCIMB 11770).